The following is a 336-amino-acid chain: Sex determination protein tasselseed-2 (336 aa).

Ile-59–Val-83 is an NAD(+) binding site. Ser-194 serves as a coordination point for substrate. Residue Tyr-207 is the Proton acceptor of the active site.

This sequence belongs to the short-chain dehydrogenases/reductases (SDR) family.

In terms of biological role, required for stage-specific floral organ abortion. The polypeptide is Sex determination protein tasselseed-2 (TS2) (Zea mays (Maize)).